The primary structure comprises 150 residues: Globin-1 (150 aa).

The region spanning 11–150 (ALTAAEKATI…MICILLRSSY (140 aa)) is the Globin domain. 2 residues coordinate heme b: His74 and His106.

Belongs to the globin family. As to quaternary structure, monomer.

The polypeptide is Globin-1 (Petromyzon marinus (Sea lamprey)).